Here is a 248-residue protein sequence, read N- to C-terminus: 4-hydroxy-tetrahydrodipicolinate reductase (248 aa).

NAD(+)-binding positions include Asp-32, 74–76 (GTT), and 99–102 (SANF). Catalysis depends on His-134, which acts as the Proton donor/acceptor. Residue His-135 coordinates (S)-2,3,4,5-tetrahydrodipicolinate. Lys-138 functions as the Proton donor in the catalytic mechanism. 144–145 (GT) provides a ligand contact to (S)-2,3,4,5-tetrahydrodipicolinate.

This sequence belongs to the DapB family.

It is found in the cytoplasm. The enzyme catalyses (S)-2,3,4,5-tetrahydrodipicolinate + NAD(+) + H2O = (2S,4S)-4-hydroxy-2,3,4,5-tetrahydrodipicolinate + NADH + H(+). It carries out the reaction (S)-2,3,4,5-tetrahydrodipicolinate + NADP(+) + H2O = (2S,4S)-4-hydroxy-2,3,4,5-tetrahydrodipicolinate + NADPH + H(+). It participates in amino-acid biosynthesis; L-lysine biosynthesis via DAP pathway; (S)-tetrahydrodipicolinate from L-aspartate: step 4/4. Catalyzes the conversion of 4-hydroxy-tetrahydrodipicolinate (HTPA) to tetrahydrodipicolinate. The chain is 4-hydroxy-tetrahydrodipicolinate reductase from Pelodictyon phaeoclathratiforme (strain DSM 5477 / BU-1).